We begin with the raw amino-acid sequence, 199 residues long: Protein ZNRD2 (199 aa).

At Ala-2 the chain carries N-acetylalanine. 4 residues coordinate Zn(2+): Cys-53, Cys-56, Cys-70, and Cys-73. A Phosphoserine modification is found at Ser-94. The interval 100–125 (QLASASELPLGSRPAPQPPVPRPEHC) is disordered. The Nuclear export signal motif lies at 173–194 (SLETSIQLCGLIRACAEALRSL).

Homodimer. Requires Zn(2+) as cofactor.

It localises to the cytoplasm. Functionally, might play a role in mitosis. Antigenic molecule. Could be a centromere-associated protein. May induce anti-centromere antibodies. The protein is Protein ZNRD2 of Homo sapiens (Human).